The sequence spans 344 residues: N-acetyl-gamma-glutamyl-phosphate reductase (344 aa).

Cys150 is a catalytic residue.

This sequence belongs to the NAGSA dehydrogenase family. Type 1 subfamily.

The protein localises to the cytoplasm. It carries out the reaction N-acetyl-L-glutamate 5-semialdehyde + phosphate + NADP(+) = N-acetyl-L-glutamyl 5-phosphate + NADPH + H(+). The protein operates within amino-acid biosynthesis; L-arginine biosynthesis; N(2)-acetyl-L-ornithine from L-glutamate: step 3/4. Functionally, catalyzes the NADPH-dependent reduction of N-acetyl-5-glutamyl phosphate to yield N-acetyl-L-glutamate 5-semialdehyde. The polypeptide is N-acetyl-gamma-glutamyl-phosphate reductase (Ectopseudomonas mendocina (strain ymp) (Pseudomonas mendocina)).